The following is a 152-amino-acid chain: MVFEGFLTGEGLRVAIVAARFNELITSKLVGGANDAFRRHGVAADAVDTAWVPGAFEIPLVAEKLAKSGNYDAVITLGAVIRGATSHYDYVCNEVAKGVAGASRETGVPIIFGVLTTDSIEQAVERAGTKAGNKGYEAAVSAIEMANLLRTI.

5-amino-6-(D-ribitylamino)uracil contacts are provided by residues Phe-21, Ala-55–Glu-57, and Ala-79–Ile-81. (2S)-2-hydroxy-3-oxobutyl phosphate is bound at residue Ala-84–Thr-85. Catalysis depends on His-87, which acts as the Proton donor. 5-amino-6-(D-ribitylamino)uracil is bound at residue Phe-112. (2S)-2-hydroxy-3-oxobutyl phosphate is bound at residue Arg-126.

This sequence belongs to the DMRL synthase family. Forms an icosahedral capsid composed of 60 subunits, arranged as a dodecamer of pentamers.

It carries out the reaction (2S)-2-hydroxy-3-oxobutyl phosphate + 5-amino-6-(D-ribitylamino)uracil = 6,7-dimethyl-8-(1-D-ribityl)lumazine + phosphate + 2 H2O + H(+). It functions in the pathway cofactor biosynthesis; riboflavin biosynthesis; riboflavin from 2-hydroxy-3-oxobutyl phosphate and 5-amino-6-(D-ribitylamino)uracil: step 1/2. Its function is as follows. Catalyzes the formation of 6,7-dimethyl-8-ribityllumazine by condensation of 5-amino-6-(D-ribitylamino)uracil with 3,4-dihydroxy-2-butanone 4-phosphate. This is the penultimate step in the biosynthesis of riboflavin. The sequence is that of 6,7-dimethyl-8-ribityllumazine synthase from Exiguobacterium sibiricum (strain DSM 17290 / CCUG 55495 / CIP 109462 / JCM 13490 / 255-15).